We begin with the raw amino-acid sequence, 40 residues long: Sulfur globule protein TR2 (40 aa).

This sequence to C.vinosum CV3. The protein envelope of the sulfur globules is composed of the three different proteins TR0, TR1 and TR2.

Functionally, structural protein of the sulfur globules, which are intracellular globules that serve for sulfur storage in purple sulfur bacteria. The protein is Sulfur globule protein TR2 of Thiocapsa roseopersicina.